A 166-amino-acid polypeptide reads, in one-letter code: RING-H2 finger protein ATL79 (166 aa).

The first 16 residues, 1–16 (MRLLVAEAASPLSSAA), serve as a signal peptide directing secretion. The chain crosses the membrane as a helical span at residues 41–61 (SVLLILVISALICALSLYAAI). Positions 71-90 (TEDDHKPDPEAAASSTPTTP) are disordered. Residues 81-90 (AAASSTPTTP) show a composition bias toward low complexity. The RING-type; atypical zinc-finger motif lies at 107–149 (CAICLSEFEQGESIQVLEKCQHGFHVKCIHKWLSTRSSCPTCR).

Belongs to the RING-type zinc finger family. ATL subfamily.

Its subcellular location is the membrane. It carries out the reaction S-ubiquitinyl-[E2 ubiquitin-conjugating enzyme]-L-cysteine + [acceptor protein]-L-lysine = [E2 ubiquitin-conjugating enzyme]-L-cysteine + N(6)-ubiquitinyl-[acceptor protein]-L-lysine.. The protein operates within protein modification; protein ubiquitination. This is RING-H2 finger protein ATL79 (ATL79) from Arabidopsis thaliana (Mouse-ear cress).